Consider the following 348-residue polypeptide: Anthranilate phosphoribosyltransferase (348 aa).

Residues Gly81, Gly84–Asp85, Thr89, Asn91–Thr94, Lys109–Ser117, and Ser121 each bind 5-phospho-alpha-D-ribose 1-diphosphate. Anthranilate is bound at residue Gly81. Ser93 serves as a coordination point for Mg(2+). Residue Asn112 coordinates anthranilate. Arg167 is an anthranilate binding site. Residues Asp226 and Glu227 each coordinate Mg(2+).

This sequence belongs to the anthranilate phosphoribosyltransferase family. In terms of assembly, homodimer. The cofactor is Mg(2+).

It carries out the reaction N-(5-phospho-beta-D-ribosyl)anthranilate + diphosphate = 5-phospho-alpha-D-ribose 1-diphosphate + anthranilate. Its pathway is amino-acid biosynthesis; L-tryptophan biosynthesis; L-tryptophan from chorismate: step 2/5. Functionally, catalyzes the transfer of the phosphoribosyl group of 5-phosphorylribose-1-pyrophosphate (PRPP) to anthranilate to yield N-(5'-phosphoribosyl)-anthranilate (PRA). The chain is Anthranilate phosphoribosyltransferase from Thermomicrobium roseum (strain ATCC 27502 / DSM 5159 / P-2).